The chain runs to 411 residues: Serpin A12 (411 aa).

The first 20 residues, 1 to 20 (MNLVLGLGLFLAGLLTVKGL), serve as a signal peptide directing secretion. Residues Asn92 and Asn267 are each glycosylated (N-linked (GlcNAc...) asparagine). The segment at 364-382 (GTEGAAGSGAQTLPMETPR) is reactive center loop.

This sequence belongs to the serpin family. Forms a stable complex with KLK7. Post-translationally, glycosylation slightly decreases affinity for heparin, but otherwise has no significant effect on KLK7 inhibitory activity or thermal stability of the protein. In terms of tissue distribution, expressed in visceral adipose tissues.

The protein localises to the secreted. Its activity is regulated as follows. Inhibition of KLK7 is enhanced by heparin. In terms of biological role, adipokine that modulates insulin action by specifically inhibiting its target protease KLK7 in white adipose tissues. This Rattus norvegicus (Rat) protein is Serpin A12 (Serpina12).